A 614-amino-acid polypeptide reads, in one-letter code: Pyruvate decarboxylase 2 (614 aa).

Residues aspartate 50 and histidine 137 each coordinate substrate. The segment at 415–523 is thiamine pyrophosphate binding; that stretch reads DSWFNCQKLK…FLINNGGYTI (109 aa). Residues aspartate 491, asparagine 518, and glycine 520 each coordinate Mg(2+). Residue glutamate 524 participates in substrate binding.

The protein belongs to the TPP enzyme family. Homotetramer. Requires a metal cation as cofactor. Thiamine diphosphate serves as cofactor. Pollen.

It catalyses the reaction a 2-oxocarboxylate + H(+) = an aldehyde + CO2. This chain is Pyruvate decarboxylase 2 (PDC2), found in Nicotiana tabacum (Common tobacco).